Reading from the N-terminus, the 60-residue chain is Ferredoxin (60 aa).

4Fe-4S ferredoxin-type domains follow at residues 2–30 (VTID…EIQG) and 31–60 (DKVV…TVKE). [4Fe-4S] cluster-binding residues include Cys9, Cys14, Cys17, Cys21, Cys41, Cys44, Cys47, and Cys51.

It depends on [4Fe-4S] cluster as a cofactor.

In terms of biological role, ferredoxins are iron-sulfur proteins that transfer electrons probably in the CO-dehydrogenase complex. In Methanothermococcus thermolithotrophicus (Methanococcus thermolithotrophicus), this protein is Ferredoxin.